The following is a 256-amino-acid chain: LexA repressor (256 aa).

The tract at residues 1–31 is disordered; it reads MTSQGRGTRRGGTRGNVRAFPEGPTDAGLTP. Positions 53 to 73 form a DNA-binding region, H-T-H motif; it reads VREIGEAVGLTSTSSVAHQLK. Residues Ser180 and Lys217 each act as for autocatalytic cleavage activity in the active site.

The protein belongs to the peptidase S24 family. In terms of assembly, homodimer.

It catalyses the reaction Hydrolysis of Ala-|-Gly bond in repressor LexA.. Represses a number of genes involved in the response to DNA damage (SOS response), including recA and lexA. In the presence of single-stranded DNA, RecA interacts with LexA causing an autocatalytic cleavage which disrupts the DNA-binding part of LexA, leading to derepression of the SOS regulon and eventually DNA repair. The polypeptide is LexA repressor (Frankia casuarinae (strain DSM 45818 / CECT 9043 / HFP020203 / CcI3)).